Consider the following 707-residue polypeptide: Ribosomal RNA large subunit methyltransferase K/L (707 aa).

The THUMP domain maps to 44-155 (VIYNLCLWSR…NDILTVSFDL (112 aa)).

The protein belongs to the methyltransferase superfamily. RlmKL family.

Its subcellular location is the cytoplasm. The catalysed reaction is guanosine(2445) in 23S rRNA + S-adenosyl-L-methionine = N(2)-methylguanosine(2445) in 23S rRNA + S-adenosyl-L-homocysteine + H(+). It carries out the reaction guanosine(2069) in 23S rRNA + S-adenosyl-L-methionine = N(2)-methylguanosine(2069) in 23S rRNA + S-adenosyl-L-homocysteine + H(+). Functionally, specifically methylates the guanine in position 2445 (m2G2445) and the guanine in position 2069 (m7G2069) of 23S rRNA. In Legionella pneumophila (strain Lens), this protein is Ribosomal RNA large subunit methyltransferase K/L.